We begin with the raw amino-acid sequence, 501 residues long: Glucan endo-1,3-beta-glucosidase 3 (501 aa).

The signal sequence occupies residues 1–18 (MAALLLLFLFLFASSALS). 2 N-linked (GlcNAc...) asparagine glycosylation sites follow: N88 and N107. The active-site Proton donor is E116. N171 and N253 each carry an N-linked (GlcNAc...) asparagine glycan. E263 serves as the catalytic Nucleophile. N-linked (GlcNAc...) asparagine glycosylation is found at N295, N353, and N357. C361 and C424 form a disulfide bridge. 4 N-linked (GlcNAc...) asparagine glycosylation sites follow: N451, N456, N457, and N466. The GPI-anchor amidated serine moiety is linked to residue S470. Residues 471–501 (GCIPKYYHHPHASFGDLTLLSLLLIIALVFL) constitute a propeptide, removed in mature form.

Belongs to the glycosyl hydrolase 17 family. Contains two additional disulfide bonds.

It localises to the cell membrane. The enzyme catalyses Hydrolysis of (1-&gt;3)-beta-D-glucosidic linkages in (1-&gt;3)-beta-D-glucans.. This chain is Glucan endo-1,3-beta-glucosidase 3, found in Arabidopsis thaliana (Mouse-ear cress).